We begin with the raw amino-acid sequence, 248 residues long: Phycocyanobilin:ferredoxin oxidoreductase (248 aa).

It belongs to the HY2 family.

It catalyses the reaction (2R,3Z)-phycocyanobilin + 4 oxidized [2Fe-2S]-[ferredoxin] = biliverdin IXalpha + 4 reduced [2Fe-2S]-[ferredoxin] + 4 H(+). In terms of biological role, catalyzes the four-electron reduction of biliverdin IX-alpha (2-electron reduction at both the A and D rings); the reaction proceeds via an isolatable 2-electron intermediate, 181,182-dihydrobiliverdin. In Synechococcus sp. (strain ATCC 27144 / PCC 6301 / SAUG 1402/1) (Anacystis nidulans), this protein is Phycocyanobilin:ferredoxin oxidoreductase.